We begin with the raw amino-acid sequence, 371 residues long: Leu/Ile/Val-binding protein homolog 1 (371 aa).

The first 23 residues, M1–A23, serve as a signal peptide directing secretion.

Belongs to the leucine-binding protein family.

Its function is as follows. Component of an amino-acid transport system. In Brucella melitensis biotype 1 (strain ATCC 23456 / CCUG 17765 / NCTC 10094 / 16M), this protein is Leu/Ile/Val-binding protein homolog 1.